We begin with the raw amino-acid sequence, 417 residues long: Serine/threonine transporter SstT (417 aa).

8 helical membrane-spanning segments follow: residues 21–41 (ILAG…VAKM), 49–69 (FISA…MASI), 83–103 (ILVL…VASF), 142–162 (ALIN…GLAL), 193–213 (IGIF…ALAG), 218–238 (LLVL…LIVF), 291–311 (IPLG…ILTL), and 331–351 (LVAA…LLLI).

Belongs to the dicarboxylate/amino acid:cation symporter (DAACS) (TC 2.A.23) family.

Its subcellular location is the cell inner membrane. It carries out the reaction L-serine(in) + Na(+)(in) = L-serine(out) + Na(+)(out). It catalyses the reaction L-threonine(in) + Na(+)(in) = L-threonine(out) + Na(+)(out). In terms of biological role, involved in the import of serine and threonine into the cell, with the concomitant import of sodium (symport system). The sequence is that of Serine/threonine transporter SstT from Proteus mirabilis (strain HI4320).